Consider the following 161-residue polypeptide: Allophycocyanin alpha subunit (161 aa).

Position 81 (C81) interacts with (2R,3E)-phycocyanobilin.

This sequence belongs to the phycobiliprotein family. As to quaternary structure, heterodimer of an alpha and a beta chain. Post-translationally, contains one covalently linked phycocyanobilin chromophore. The chromophore on position 81 is added by the phycocyanobilin lyase CpcUS.

The protein localises to the cellular thylakoid membrane. In terms of biological role, light-harvesting photosynthetic bile pigment-protein from the phycobiliprotein complex. Allophycocyanin has a maximum absorption at approximately 650 nanometers. This Picosynechococcus sp. (strain ATCC 27264 / PCC 7002 / PR-6) (Agmenellum quadruplicatum) protein is Allophycocyanin alpha subunit (apcA).